A 463-amino-acid chain; its full sequence is Succinate--CoA ligase [ADP-forming] subunit beta, mitochondrial (463 aa).

Residues 1-52 constitute a mitochondrion transit peptide; sequence MAASMFYGRLVAVATLRNHRPRTAQRAAAQVLGSSGLFNNHGLQVQQQQQRN. In terms of domain architecture, ATP-grasp spans 61-288; sequence MELLQEAGVS…SNSAYRQKKI (228 aa). K78 bears the N6-acetyllysine mark. Y84 bears the Phosphotyrosine mark. N6-acetyllysine; alternate is present on K88. K88 is subject to N6-succinyllysine; alternate. ATP contacts are provided by residues K98 and 105-107; that span reads GRG. N6-acetyllysine is present on residues K129, K139, K143, and K216. Mg(2+) contacts are provided by N258 and D272. Position 279 is a phosphoserine (S279). Residue N323 coordinates substrate. Position 341 is a phosphothreonine (T341). N6-acetyllysine is present on K368. 380 to 382 contributes to the substrate binding site; sequence GIM.

This sequence belongs to the succinate/malate CoA ligase beta subunit family. ATP-specific subunit beta subfamily. In terms of assembly, heterodimer of an alpha and a beta subunit. The beta subunit determines specificity for ATP. Interacts with ALAS2. The cofactor is Mg(2+). Widely expressed. Not expressed in liver and lung.

Its subcellular location is the mitochondrion. The catalysed reaction is succinate + ATP + CoA = succinyl-CoA + ADP + phosphate. It functions in the pathway carbohydrate metabolism; tricarboxylic acid cycle; succinate from succinyl-CoA (ligase route): step 1/1. Its activity is regulated as follows. Inhibited by itaconate. ATP-specific succinyl-CoA synthetase functions in the citric acid cycle (TCA), coupling the hydrolysis of succinyl-CoA to the synthesis of ATP and thus represents the only step of substrate-level phosphorylation in the TCA. The beta subunit provides nucleotide specificity of the enzyme and binds the substrate succinate, while the binding sites for coenzyme A and phosphate are found in the alpha subunit. The chain is Succinate--CoA ligase [ADP-forming] subunit beta, mitochondrial from Homo sapiens (Human).